The primary structure comprises 360 residues: Ferredoxin--NADP reductase, leaf isozyme 1, chloroplastic (360 aa).

The transit peptide at 1–49 (MAAAISAAVSLPSSKSSSLLTKISSVSPQRIFLKKSTVCYRRVVSVKAQ) directs the protein to the chloroplast. One can recognise an FAD-binding FR-type domain in the interval 81-203 (KNPYTGRCLL…TGPVGKEMLM (123 aa)). Residues 139-142 (RLYS), 160-162 (CVK), tyrosine 166, and 177-179 (VCS) contribute to the FAD site. 2 residues coordinate NADP(+): serine 142 and lysine 162. A disulfide bridge links cysteine 178 with cysteine 183. Position 179 is a phosphoserine (serine 179). Threonine 210 is modified (phosphothreonine). Threonine 218 serves as a coordination point for FAD. NADP(+)-binding positions include threonine 218, 250-251 (VP), 280-281 (SR), lysine 290, 319-320 (GL), and glutamate 358.

This sequence belongs to the ferredoxin--NADP reductase type 1 family. In terms of assembly, heterodimer with LFNR2. Interacts with PGRL1A and PGRL1B. Interacts with TIC62. Component of high molecular weight thylakoid LFNRs-containing protein complexes containing LIR1, LFNR1, LFNR2, TIC62 and TROL proteins. Interacts directly with LIR1 and TIC62; LIR1 increases the affinity of LFNR1 and LFNR2 for TIC62. Binds to YCF54 in chloroplasts. FAD serves as cofactor. May form interchain disulfide bonds with LIR1. As to expression, expressed in shoots. Restricted to green tissues, being more abundant in siliques.

It localises to the plastid. It is found in the chloroplast stroma. The protein localises to the chloroplast thylakoid membrane. It carries out the reaction 2 reduced [2Fe-2S]-[ferredoxin] + NADP(+) + H(+) = 2 oxidized [2Fe-2S]-[ferredoxin] + NADPH. It participates in energy metabolism; photosynthesis. Its function is as follows. Plays a key role in regulating the relative amounts of cyclic and non-cyclic electron flow to meet the demands of the plant for ATP and reducing power. Probable electron donor required for the MgProto monomethylester (MgProtoME) cyclase complex reaction to form protochlorophyllide, thus connecting chlorophyll synthesis with photosynthetic activity. This Arabidopsis thaliana (Mouse-ear cress) protein is Ferredoxin--NADP reductase, leaf isozyme 1, chloroplastic.